The primary structure comprises 1026 residues: Multidrug resistance protein MdtC (1026 aa).

The Cytoplasmic segment spans residues 1 to 6 (MRFFAL). The helical transmembrane segment at 7 to 29 (FIYRPVATILIAAAITLCGILGF) threads the bilayer. Topologically, residues 30–335 (RLLPVAPLPQ…TIRASLQEVE (306 aa)) are periplasmic. A helical membrane pass occupies residues 336–353 (ETLAISVALVILVVFLFL). The Cytoplasmic segment spans residues 354 to 359 (RSGRAT). The chain crosses the membrane as a helical span at residues 360-379 (LIPAVAVPVSLIGTFAAMYL). Topologically, residues 380–388 (CGFSLNNLS) are periplasmic. A helical transmembrane segment spans residues 389–411 (LMALTIATGFVVDDAIVVLENIA). At 412–430 (RHLEAGMKPLQAALQGTRE) the chain is on the cytoplasmic side. Residues 431–453 (VGFTVISMSLSLVAVFLPLLLMG) traverse the membrane as a helical segment. The Periplasmic portion of the chain corresponds to 454-467 (GLPGRLLREFAVTL). The chain crosses the membrane as a helical span at residues 468-490 (SVAIGISLVVSLTLTPMMCGWML). The Cytoplasmic segment spans residues 491–852 (KSSKPRTQPR…QVFQQTMNSQ (362 aa)). The helical transmembrane segment at 853–875 (LILIVAAIATVYIVLGILYESYV) threads the bilayer. The Periplasmic portion of the chain corresponds to 876–894 (HPLTILSTLPSAGVGALLA). A helical transmembrane segment spans residues 895–917 (LELFNAPFSLIALIGIMLLIGIV). Over 918-947 (KKNAIMMVDFALEAQRSGGLTPEQAIFQAC) the chain is Cytoplasmic. A helical membrane pass occupies residues 948-970 (LLRFRPIMMTTLAALFGALPLVL). Topologically, residues 971-984 (SGGDGSELRQPLGI) are periplasmic. The chain crosses the membrane as a helical span at residues 985 to 1007 (TIVGGLVMSQLLTLYTTPVVYLF). At 1008–1026 (FDRLRLRFSRKNSKPVVEI) the chain is on the cytoplasmic side.

This sequence belongs to the resistance-nodulation-cell division (RND) (TC 2.A.6) family. MdtC subfamily. Part of a tripartite efflux system composed of MdtA, MdtB and MdtC. MdtC forms a heteromultimer with MdtB.

It localises to the cell inner membrane. This is Multidrug resistance protein MdtC from Salmonella typhimurium (strain LT2 / SGSC1412 / ATCC 700720).